A 393-amino-acid polypeptide reads, in one-letter code: 8-amino-7-oxononanoate synthase (393 aa).

A substrate-binding site is contributed by Arg-18. Residue 105-106 (GY) participates in pyridoxal 5'-phosphate binding. His-130 lines the substrate pocket. Positions 178, 206, and 234 each coordinate pyridoxal 5'-phosphate. Lys-237 is modified (N6-(pyridoxal phosphate)lysine). Thr-353 is a substrate binding site.

The protein belongs to the class-II pyridoxal-phosphate-dependent aminotransferase family. BioF subfamily. As to quaternary structure, homodimer. Pyridoxal 5'-phosphate is required as a cofactor.

It catalyses the reaction 6-carboxyhexanoyl-[ACP] + L-alanine + H(+) = (8S)-8-amino-7-oxononanoate + holo-[ACP] + CO2. The protein operates within cofactor biosynthesis; biotin biosynthesis. Functionally, catalyzes the decarboxylative condensation of pimeloyl-[acyl-carrier protein] and L-alanine to produce 8-amino-7-oxononanoate (AON), [acyl-carrier protein], and carbon dioxide. In Geotalea daltonii (strain DSM 22248 / JCM 15807 / FRC-32) (Geobacter daltonii), this protein is 8-amino-7-oxononanoate synthase.